The following is a 3032-amino-acid chain: Compactin nonaketide synthase, polyketide synthase component (3032 aa).

The Ketosynthase family 3 (KS3) domain occupies 8–447; it reads NEPIVVVGSG…GTNAHAIIEE (440 aa). Catalysis depends on for beta-ketoacyl synthase activity residues Cys181, His320, and His367. The acyl and malonyl transferase stretch occupies residues 560–901; sequence VFTGQGAQWP…GYIWERFGVR (342 aa). The active-site For malonyltransferase activity is the Ser654. Residues 953-1089 form an N-terminal hotdog fold region; sequence HLLLGKLSSY…GQIVITLGEA (137 aa). The 309-residue stretch at 953-1261 folds into the PKS/mFAS DH domain; sequence HLLLGKLSSY…FKPFSPPTAS (309 aa). His985 (proton acceptor; for dehydratase activity) is an active-site residue. The tract at residues 985–997 is dehydratase-like; that stretch reads HALQGQTVFPAAG. The C-terminal hotdog fold stretch occupies residues 1106 to 1261; the sequence is MNNVNIDFFY…FKPFSPPTAS (156 aa). The Proton donor; for dehydratase activity role is filled by Asp1168. The methyltransferase stretch occupies residues 1506–1544; that stretch reads YDLIIASDVLHASSNFEEKLAHIRSLLKPGGHLVTFGVT. In terms of domain architecture, Carrier spans 2441–2520; sequence DQVRQIVIDG…DLADDAATRL (80 aa). The residue at position 2480 (Ser2480) is an O-(pantetheine 4'-phosphoryl)serine. The segment at 2531–2580 is disordered; the sequence is IGDSTGTSDSGASPTPTDSHDEASSATSTDASSAEEDEEQEDDNEQGGRK. Residues 2532–2547 are compositionally biased toward low complexity; sequence GDSTGTSDSGASPTPT. The span at 2563 to 2575 shows a compositional bias: acidic residues; the sequence is SAEEDEEQEDDNE. Residues 2586-2946 are peptide synthetase elongation; that stretch reads RLSLGQEYSW…PKTQTHAPLF (361 aa).

Pantetheine 4'-phosphate is required as a cofactor.

The catalysed reaction is holo-[compactin nonaketide synthase] + 9 malonyl-CoA + 11 NADPH + 20 H(+) = dihydro-ML-236C-[compactin nonaketide synthase] + 9 CO2 + 11 NADP(+) + 9 CoA + 6 H2O. Its pathway is polyketide biosynthesis. Its function is as follows. Nonaketide synthase; part of the gene cluster that mediates the biosynthesis of compactin, also known as mevastatin or ML-236B, and which acts as a potent competitive inhibitor of HMG-CoA reductase. Compactin biosynthesis is performed in two stages. The first stage is catalyzed by the nonaketide synthase mlcA, which belongs to type I polyketide synthases and catalyzes the iterative nine-step formation of the polyketide. This PKS stage is completed by the action of dehydrogenase mlcG, which catalyzes the NADPH-dependent reduction of the unsaturated tetra-, penta- and heptaketide intermediates that arise during the mlcA-mediated biosynthesis of the nonaketide chain and leads to dihydro-ML-236C carboxylate. Covalently bound dihydro-ML-236C carboxylate is released from mlcA by the mlcF esterase. Conversion of dihydro-ML-236C carboxylate into ML-236A carboxylate is subsequently performed with the participation of molecular oxygen and P450 monoogygenase mlcC. Finally, mlcH performs the conversion of ML-236A carboxylate to ML-236B/compactin carboxylate through the addition of the side-chain diketide moiety produced by the diketide synthase mlcB. This chain is Compactin nonaketide synthase, polyketide synthase component, found in Penicillium citrinum.